The primary structure comprises 65 residues: DNA-directed RNA polymerase subunit Rpo10 (65 aa).

Zn(2+) contacts are provided by C7, C10, C44, and C45.

It belongs to the archaeal Rpo10/eukaryotic RPB10 RNA polymerase subunit family. Part of the RNA polymerase complex. Requires Zn(2+) as cofactor.

It localises to the cytoplasm. It carries out the reaction RNA(n) + a ribonucleoside 5'-triphosphate = RNA(n+1) + diphosphate. In terms of biological role, DNA-dependent RNA polymerase (RNAP) catalyzes the transcription of DNA into RNA using the four ribonucleoside triphosphates as substrates. The chain is DNA-directed RNA polymerase subunit Rpo10 from Thermococcus onnurineus (strain NA1).